The primary structure comprises 1042 residues: V(D)J recombination-activating protein 1 (1042 aa).

Positions K40–S52 are enriched in basic and acidic residues. The interval K40 to F80 is disordered. K233 participates in a covalent cross-link: Glycyl lysine isopeptide (Lys-Gly) (interchain with G-Cter in ubiquitin). Zn(2+) is bound by residues C268, H272, C292, C295, H297, C307, H309, C312, C315, C327, C330, C357, C362, H374, and H378. The RING-type zinc-finger motif lies at C292–Q331. Residues L353–R382 form an RAG1-type zinc finger. Positions G391–Q458 form a DNA-binding region, NBD. Positions 602, 710, and 964 each coordinate a divalent metal cation.

Belongs to the RAG1 family. Homodimer. Component of the RAG complex composed of core components RAG1 and RAG2, and associated component HMGB1 or HMGB2. Interacts with DCAF1, leading to recruitment of the CUL4A-RBX1-DDB1-DCAF1/VPRBP complex to ubiquitinate proteins and limit error-prone repair during V(D)J recombination. Mg(2+) serves as cofactor. It depends on Mn(2+) as a cofactor. Autoubiquitinated in the presence of CDC34/UBCH3.

It is found in the nucleus. The catalysed reaction is S-ubiquitinyl-[E2 ubiquitin-conjugating enzyme]-L-cysteine + [acceptor protein]-L-lysine = [E2 ubiquitin-conjugating enzyme]-L-cysteine + N(6)-ubiquitinyl-[acceptor protein]-L-lysine.. Catalytic component of the RAG complex, a multiprotein complex that mediates the DNA cleavage phase during V(D)J recombination. V(D)J recombination assembles a diverse repertoire of immunoglobulin and T-cell receptor genes in developing B and T-lymphocytes through rearrangement of different V (variable), in some cases D (diversity), and J (joining) gene segments. In the RAG complex, RAG1 mediates the DNA-binding to the conserved recombination signal sequences (RSS) and catalyzes the DNA cleavage activities by introducing a double-strand break between the RSS and the adjacent coding segment. RAG2 is not a catalytic component but is required for all known catalytic activities. DNA cleavage occurs in 2 steps: a first nick is introduced in the top strand immediately upstream of the heptamer, generating a 3'-hydroxyl group that can attack the phosphodiester bond on the opposite strand in a direct transesterification reaction, thereby creating 4 DNA ends: 2 hairpin coding ends and 2 blunt, 5'-phosphorylated ends. The chromatin structure plays an essential role in the V(D)J recombination reactions and the presence of histone H3 trimethylated at 'Lys-4' (H3K4me3) stimulates both the nicking and haipinning steps. The RAG complex also plays a role in pre-B cell allelic exclusion, a process leading to expression of a single immunoglobulin heavy chain allele to enforce clonality and monospecific recognition by the B-cell antigen receptor (BCR) expressed on individual B-lymphocytes. The introduction of DNA breaks by the RAG complex on one immunoglobulin allele induces ATM-dependent repositioning of the other allele to pericentromeric heterochromatin, preventing accessibility to the RAG complex and recombination of the second allele. In addition to its endonuclease activity, RAG1 also acts as an E3 ubiquitin-protein ligase that mediates monoubiquitination of histone H3. Histone H3 monoubiquitination is required for the joining step of V(D)J recombination. Mediates polyubiquitination of KPNA1. This Oryctolagus cuniculus (Rabbit) protein is V(D)J recombination-activating protein 1 (RAG1).